The sequence spans 146 residues: Globin (146 aa).

Serine 1 bears the N-acetylserine mark. In terms of domain architecture, Globin spans 1 to 146; it reads SLSGAEADLL…IIDALKKAGK (146 aa). Position 95 (histidine 95) interacts with heme b.

Belongs to the globin family. In terms of assembly, monomer.

The protein is Globin of Bursatella leachii (Ragged sea hare).